Reading from the N-terminus, the 355-residue chain is Phosphoribosylformylglycinamidine cyclo-ligase (355 aa).

It belongs to the AIR synthase family.

The protein resides in the cytoplasm. It catalyses the reaction 2-formamido-N(1)-(5-O-phospho-beta-D-ribosyl)acetamidine + ATP = 5-amino-1-(5-phospho-beta-D-ribosyl)imidazole + ADP + phosphate + H(+). Its pathway is purine metabolism; IMP biosynthesis via de novo pathway; 5-amino-1-(5-phospho-D-ribosyl)imidazole from N(2)-formyl-N(1)-(5-phospho-D-ribosyl)glycinamide: step 2/2. The polypeptide is Phosphoribosylformylglycinamidine cyclo-ligase (Beijerinckia indica subsp. indica (strain ATCC 9039 / DSM 1715 / NCIMB 8712)).